The sequence spans 294 residues: Basic endochitinase (294 aa).

The N-terminal stretch at 1-24 (MNIKVSLLFILPIFLLLLTSKVKA) is a signal peptide. The GH18 domain occupies 25-294 (GDIVVYWGQD…GYSSAIRGAV (270 aa)). 2 disulfide bridges follow: cysteine 44-cysteine 91 and cysteine 74-cysteine 81. Residue glutamate 151 is the Proton donor of the active site. An intrachain disulfide couples cysteine 182 to cysteine 211.

It belongs to the glycosyl hydrolase 18 family. Chitinase class II subfamily.

The enzyme catalyses Random endo-hydrolysis of N-acetyl-beta-D-glucosaminide (1-&gt;4)-beta-linkages in chitin and chitodextrins.. This protein functions as a defense against chitin containing fungal pathogens. This chain is Basic endochitinase, found in Nicotiana tabacum (Common tobacco).